A 606-amino-acid polypeptide reads, in one-letter code: 1-deoxy-D-xylulose-5-phosphate synthase (606 aa).

Thiamine diphosphate contacts are provided by residues His-63 and 104 to 106 (GHS). Asp-137 provides a ligand contact to Mg(2+). Thiamine diphosphate is bound by residues 138–139 (GS), Asn-166, Tyr-273, and Glu-354. Asn-166 is a Mg(2+) binding site.

It belongs to the transketolase family. DXPS subfamily. In terms of assembly, homodimer. Requires Mg(2+) as cofactor. Thiamine diphosphate serves as cofactor.

The catalysed reaction is D-glyceraldehyde 3-phosphate + pyruvate + H(+) = 1-deoxy-D-xylulose 5-phosphate + CO2. It participates in metabolic intermediate biosynthesis; 1-deoxy-D-xylulose 5-phosphate biosynthesis; 1-deoxy-D-xylulose 5-phosphate from D-glyceraldehyde 3-phosphate and pyruvate: step 1/1. Catalyzes the acyloin condensation reaction between C atoms 2 and 3 of pyruvate and glyceraldehyde 3-phosphate to yield 1-deoxy-D-xylulose-5-phosphate (DXP). This chain is 1-deoxy-D-xylulose-5-phosphate synthase, found in Sulfurimonas denitrificans (strain ATCC 33889 / DSM 1251) (Thiomicrospira denitrificans (strain ATCC 33889 / DSM 1251)).